Consider the following 121-residue polypeptide: Ribonuclease P protein component (121 aa).

The protein belongs to the RnpA family. As to quaternary structure, consists of a catalytic RNA component (M1 or rnpB) and a protein subunit.

The enzyme catalyses Endonucleolytic cleavage of RNA, removing 5'-extranucleotides from tRNA precursor.. RNaseP catalyzes the removal of the 5'-leader sequence from pre-tRNA to produce the mature 5'-terminus. It can also cleave other RNA substrates such as 4.5S RNA. The protein component plays an auxiliary but essential role in vivo by binding to the 5'-leader sequence and broadening the substrate specificity of the ribozyme. The sequence is that of Ribonuclease P protein component from Lactobacillus delbrueckii subsp. bulgaricus (strain ATCC 11842 / DSM 20081 / BCRC 10696 / JCM 1002 / NBRC 13953 / NCIMB 11778 / NCTC 12712 / WDCM 00102 / Lb 14).